We begin with the raw amino-acid sequence, 73 residues long: Excelsatoxin A (73 aa).

Positions 1–20 (MRFALVAAITIALLVAGSVA) are cleaved as a signal peptide. The propeptide occupies 21–37 (DESSEDIDNIVIKTPLD). 3 disulfide bridges follow: Cys-41–Cys-58, Cys-46–Cys-60, and Cys-54–Cys-69.

Belongs to the gympietide family. Expressed in trichomes, that are stiff epidermal hairs located on the surface of petioles and leaves. Not expressed in other aerial parts.

It localises to the secreted. Its function is as follows. Neurotoxin certainly responsible for the defensive, persistent, and painful stings of the giant stinging tree. Inhibits inactivation of Nav1.7/SCN9A sodium channel in sensory neurons by directly interacting with TMEM233, a newly described Nav-interacting protein. Has virtually no effect on Nav1.7/SCN9A function in heterologous expression systems and in neurons that do not express TMEM233. Also weakly but significantly affects Nav1.8/SCN10A. Coexpression of TMEM233 with Nav also confers ExTxA sensitivity to Nav1.1-Nav1.6. On the Nav1.7/SCN9A channel, causes a significant hyperpolarizing shift in the voltage dependence of activation. Its effects on Nav currents are irreversible, with no apparent reduction in activity even after repeated wash steps over 30 minutes. Does not show activity on Nav1.9/SCN11A. Does not show insecticidal activities. In vivo, induces nocifensive behavior in mice (licking or biting and shaking or lifting of the affected paw) lasting for approximately 1 hour. The polypeptide is Excelsatoxin A (Dendrocnide excelsa (Giant stinging tree)).